Reading from the N-terminus, the 1165-residue chain is Peroxisomal ATPase PEX6 (1165 aa).

The protein belongs to the AAA ATPase family. As to quaternary structure, interacts with PEX1; forming the PEX1-PEX6 AAA ATPase complex, which is composed of a heterohexamer formed by a trimer of PEX1-PEX6 dimers.

It is found in the membrane. It catalyses the reaction ATP + H2O = ADP + phosphate + H(+). Its function is as follows. Component of the PEX1-PEX6 AAA ATPase complex involved in peroxisome biosynthesis. The complex acts as a protein dislocase complex that mediates the ATP-dependent extraction of the PEX5 receptor from peroxisomal membranes, an essential step for PEX5 recycling. Specifically recognizes PEX5 monoubiquitinated at 'Cys-6', and pulls it out of the peroxisome lumen through the PEX2-PEX10-PEX12 retrotranslocation channel. Extraction by the PEX1-PEX6 AAA ATPase complex is accompanied by unfolding of the TPR repeats and release of bound cargo from PEX5. The sequence is that of Peroxisomal ATPase PEX6 from Komagataella pastoris (Yeast).